The following is a 203-amino-acid chain: MANLLIVKAHPLDAQKSYALRALEEFQTRYASLHPEDRIEIVDVFEDQIPALDKPLLEAMGAAKRGEAISPEQAEQLGRYNALTQQFLAADKIVVVNPLWNLNVPSQLVSWINTINVAGLTFKYGPEGSIGLVKGKKLLHIQSNGGVYAGQDPAAQYIKSIFEFLGFEDIHQVFIEGQSADPSQSQVIFEEAMAKIDQILESY.

Residue 143 to 146 (SNGG) participates in FMN binding.

It belongs to the azoreductase type 1 family. Homodimer. FMN is required as a cofactor.

The enzyme catalyses 2 a quinone + NADH + H(+) = 2 a 1,4-benzosemiquinone + NAD(+). It catalyses the reaction N,N-dimethyl-1,4-phenylenediamine + anthranilate + 2 NAD(+) = 2-(4-dimethylaminophenyl)diazenylbenzoate + 2 NADH + 2 H(+). Functionally, quinone reductase that provides resistance to thiol-specific stress caused by electrophilic quinones. Also exhibits azoreductase activity. Catalyzes the reductive cleavage of the azo bond in aromatic azo compounds to the corresponding amines. This chain is FMN-dependent NADH:quinone oxidoreductase, found in Streptococcus suis (strain 98HAH33).